We begin with the raw amino-acid sequence, 270 residues long: Acetylglutamate kinase (270 aa).

Substrate-binding positions include 41 to 42 (GG), Arg63, and Asn166.

This sequence belongs to the acetylglutamate kinase family. ArgB subfamily.

The protein localises to the cytoplasm. It catalyses the reaction N-acetyl-L-glutamate + ATP = N-acetyl-L-glutamyl 5-phosphate + ADP. It functions in the pathway amino-acid biosynthesis; L-arginine biosynthesis; N(2)-acetyl-L-ornithine from L-glutamate: step 2/4. Its function is as follows. Catalyzes the ATP-dependent phosphorylation of N-acetyl-L-glutamate. The chain is Acetylglutamate kinase from Anaeromyxobacter dehalogenans (strain 2CP-C).